Consider the following 478-residue polypeptide: Leukotoxin secretion protein D (478 aa).

Residues 1–59 (MKIWLSGIYEFFLRYKNTWAEVWKIRKELDHPNRKKDESEFLPAHLDLIETPVSKKPRL) are Cytoplasmic-facing. A helical transmembrane segment spans residues 60–80 (IAYLIMLFLVVAIVLASVSKV). Over 81–478 (EIVATAPGKL…ESVTESLRER (398 aa)) the chain is Periplasmic.

Belongs to the membrane fusion protein (MFP) (TC 8.A.1) family.

It is found in the cell inner membrane. Involved in the transport of the Leukotoxin. In Mannheimia haemolytica (Pasteurella haemolytica), this protein is Leukotoxin secretion protein D (lktD).